Reading from the N-terminus, the 310-residue chain is MPEKLQVAIVGSGNISTDLLYKLQRSEYLEPRWMIGIDPESEGLARARKLGLETSHEGVDWLLAQDDKPDLVFEATSAYVHRAAAPRYEEAGIRAIDLTPAAVGPAVIPPANLREHLDAPNVNMITCGGQATIPIVYAVTRAVTEQGGTVPYAEIVASVSSSSAGPGTRANIDEFTKTTSKGVQTIGGAARGKAIIILNPADPPMIMRDTIFCAIPEDVDRDAIAQSIRDVVAEVQTYVPGYRLLNDPQFDDPSINSGGQAVVTTFVEVEGAGDYLPPYAGNLDIMTAAAAKVGEEIAKESLSLAGGAQA.

12–15 (SGNI) serves as a coordination point for NAD(+). The Acyl-thioester intermediate role is filled by cysteine 127. NAD(+) contacts are provided by residues 163-171 (SAGPGTRAN) and asparagine 282.

This sequence belongs to the acetaldehyde dehydrogenase family.

It catalyses the reaction acetaldehyde + NAD(+) + CoA = acetyl-CoA + NADH + H(+). The protein is Acetaldehyde dehydrogenase 1 of Mycobacterium sp. (strain KMS).